Consider the following 406-residue polypeptide: Peptidase T (406 aa).

His82 is a Zn(2+) binding site. Asp84 is a catalytic residue. Asp142 contributes to the Zn(2+) binding site. Glu176 acts as the Proton acceptor in catalysis. The Zn(2+) site is built by Glu177, Asp199, and His381.

It belongs to the peptidase M20B family. It depends on Zn(2+) as a cofactor.

The protein localises to the cytoplasm. The enzyme catalyses Release of the N-terminal residue from a tripeptide.. Cleaves the N-terminal amino acid of tripeptides. This chain is Peptidase T, found in Streptococcus agalactiae serotype III (strain NEM316).